The primary structure comprises 177 residues: Alkyl hydroperoxide reductase AhpD (177 aa).

Cys-130 serves as the catalytic Proton donor. An intrachain disulfide couples Cys-130 to Cys-133. Residue Cys-133 is the Cysteine sulfenic acid (-SOH) intermediate of the active site.

Belongs to the AhpD family. In terms of assembly, homotrimer.

The enzyme catalyses N(6)-[(R)-dihydrolipoyl]-L-lysyl-[lipoyl-carrier protein] + a hydroperoxide = N(6)-[(R)-lipoyl]-L-lysyl-[lipoyl-carrier protein] + an alcohol + H2O. In terms of biological role, antioxidant protein with alkyl hydroperoxidase activity. Required for the reduction of the AhpC active site cysteine residues and for the regeneration of the AhpC enzyme activity. The sequence is that of Alkyl hydroperoxide reductase AhpD from Mycobacterium bovis (strain ATCC BAA-935 / AF2122/97).